The sequence spans 335 residues: Fructose-1,6-bisphosphatase class 1 (335 aa).

Mg(2+) contacts are provided by Glu93, Asp117, Leu119, and Asp120. Substrate-binding positions include Asp120–Ser123, Asn213, Tyr244, and Lys274. Glu280 lines the Mg(2+) pocket.

Belongs to the FBPase class 1 family. As to quaternary structure, homotetramer. Mg(2+) serves as cofactor.

It localises to the cytoplasm. The enzyme catalyses beta-D-fructose 1,6-bisphosphate + H2O = beta-D-fructose 6-phosphate + phosphate. The protein operates within carbohydrate biosynthesis; gluconeogenesis. This Flavobacterium psychrophilum (strain ATCC 49511 / DSM 21280 / CIP 103535 / JIP02/86) protein is Fructose-1,6-bisphosphatase class 1.